A 224-amino-acid chain; its full sequence is MSSHPPIRSYVLRQGYFSHAQRHAYESLLPRYGIPFSENPIDLDSIFGRTAPKILEIGSGMGETTVEIAAQHPEKDFVAIEVHAPGIGSLLDRIEKHGLTNLRIIPHDAKLVLQHMLTGESLDGIHIFFPDPWPKARHHKRRLIQSDFVSLLCNRLKPGGYLHIATDWEDYAIHSLHVLSSEQRLINTAADYAPRPAYRPLTKFEQRGMKLGHTIRDLIFTKAA.

Positions 56, 81, 108, and 131 each coordinate S-adenosyl-L-methionine. D131 is an active-site residue. Residues K135, D167, and 202–205 contribute to the substrate site; that span reads TKFE.

The protein belongs to the class I-like SAM-binding methyltransferase superfamily. TrmB family.

The catalysed reaction is guanosine(46) in tRNA + S-adenosyl-L-methionine = N(7)-methylguanosine(46) in tRNA + S-adenosyl-L-homocysteine. The protein operates within tRNA modification; N(7)-methylguanine-tRNA biosynthesis. Functionally, catalyzes the formation of N(7)-methylguanine at position 46 (m7G46) in tRNA. In Nitrosomonas eutropha (strain DSM 101675 / C91 / Nm57), this protein is tRNA (guanine-N(7)-)-methyltransferase.